The following is a 311-amino-acid chain: Aspartate carbamoyltransferase catalytic subunit (311 aa).

2 residues coordinate carbamoyl phosphate: Arg55 and Thr56. Lys85 contacts L-aspartate. Residues Arg106, His135, and Gln138 each contribute to the carbamoyl phosphate site. The L-aspartate site is built by Arg168 and Arg230. 2 residues coordinate carbamoyl phosphate: Leu268 and Pro269.

It belongs to the aspartate/ornithine carbamoyltransferase superfamily. ATCase family. Heterododecamer (2C3:3R2) of six catalytic PyrB chains organized as two trimers (C3), and six regulatory PyrI chains organized as three dimers (R2).

The catalysed reaction is carbamoyl phosphate + L-aspartate = N-carbamoyl-L-aspartate + phosphate + H(+). Its pathway is pyrimidine metabolism; UMP biosynthesis via de novo pathway; (S)-dihydroorotate from bicarbonate: step 2/3. Catalyzes the condensation of carbamoyl phosphate and aspartate to form carbamoyl aspartate and inorganic phosphate, the committed step in the de novo pyrimidine nucleotide biosynthesis pathway. The protein is Aspartate carbamoyltransferase catalytic subunit of Yersinia enterocolitica serotype O:8 / biotype 1B (strain NCTC 13174 / 8081).